Consider the following 274-residue polypeptide: CDC48-associated ubiquitin-like/zinc finger protein 1 (274 aa).

The segment at 12 to 58 (LDVGKHCAYCRQLDFLPFHCSFCNEDFCSNHRLKEDHHCRWLLEHEE) adopts an AN1-type zinc-finger fold. Zn(2+) is bound by residues cysteine 18, cysteine 21, cysteine 31, cysteine 34, cysteine 39, histidine 42, histidine 48, and cysteine 50. The interval 170-266 (NRIYIWCYLV…KDLDTLYLVH (97 aa)) is ubiquitin-like. Phosphoserine is present on serine 273.

As to quaternary structure, interacts (via its ubiquitin-like domain) with CDC48 (via N-terminus). Associates with the 26S proteasome. Specifically interacts with the regulatory particle (RP) subunit RPN2. Exposure to arsenite, a known inducer of protein misfolding resulting in accumulation of polyubiquitinated conjugates, enhances the association with the proteoasome. Binds to ubiquitinated proteins conjugated to a 4 or more molecule ubiquitin chain. Binding to ubiquitinated proteins is zinc-dependent.

Its subcellular location is the cytoplasm. It is found in the nucleus. Functionally, promotes efficient arsenite-induced clearance of stress granules (SGs). May have a role in the ubiquitin-proteasome system (UPS) protecting cells from metalloid-induced proteotoxicity. The protein is CDC48-associated ubiquitin-like/zinc finger protein 1 of Saccharomyces cerevisiae (strain ATCC 204508 / S288c) (Baker's yeast).